A 165-amino-acid polypeptide reads, in one-letter code: PARP-type zinc finger-containing protein C13F5.07c (165 aa).

A PARP-type; degenerate zinc finger spans residues 8 to 100 (YRIEIAPNNR…KVVDAINEGH (93 aa)). A compositionally biased stretch (basic and acidic residues) spans 100–114 (HVSESDERESRKLGE). Positions 100–165 (HVSESDERES…TDGSEAYEDD (66 aa)) are disordered. Residues 117 to 128 (NVNSQKLKTSSP) show a composition bias toward polar residues. Basic residues predominate over residues 131-141 (VVRKNKRHHTT). The span at 149-165 (SDLDAEFTDGSEAYEDD) shows a compositional bias: acidic residues.

It localises to the cytoplasm. The protein resides in the nucleus. In Schizosaccharomyces pombe (strain 972 / ATCC 24843) (Fission yeast), this protein is PARP-type zinc finger-containing protein C13F5.07c.